The following is a 346-amino-acid chain: Phospholipase A1 (346 aa).

A signal peptide spans 1 to 26 (MRKFAAIFVVFFVQCTHLYSLAQARA). A propeptide spanning residues 27-37 (EPDPGVVEYLK) is cleaved from the precursor. Residues Asn-44 and Asn-72 are each glycosylated (N-linked (GlcNAc...) asparagine). Ser-167 (nucleophile) is an active-site residue. The N-linked (GlcNAc...) asparagine glycan is linked to Asn-185. Active-site charge relay system residues include Asp-195 and His-258.

This sequence belongs to the AB hydrolase superfamily. Lipase family. Contains six disulfide bonds. In terms of processing, N-glycosylated; contains mannose. In terms of tissue distribution, expressed by the venom gland.

The protein localises to the secreted. It carries out the reaction a 1,2-diacyl-sn-glycero-3-phosphocholine + H2O = a 2-acyl-sn-glycero-3-phosphocholine + a fatty acid + H(+). Functionally, catalyzes the hydrolysis of phosphatidylcholine with phospholipase A1 activity. Induces hemolytic activity. Acts as an allergen. In Solenopsis invicta (Red imported fire ant), this protein is Phospholipase A1.